The following is an 877-amino-acid chain: Dystroglycan 1 (877 aa).

The signal sequence occupies residues 1–29 (MRMSAGLSLLIPLWGRTFLLLLSVAVTQS). The segment at 30–408 (RWPSEPSDAV…GHIRPTMTIP (379 aa)) is required for laminin recognition. Positions 49–71 (SMHSVLSDLHEAVPTVVGIPDGT) are O-glycosylated at one site. N-linked (GlcNAc...) asparagine glycosylation is present at Asn141. Cys182 and Cys264 are disulfide-bonded. The segment at 316 to 468 (ATPTPVTAIG…PPTRIRTTTS (153 aa)) is mucin-like domain. O-linked (Man6P...) threonine glycosylation is found at Thr317, Thr319, and Thr379. Disordered stretches follow at residues 380–444 (PTLG…PVPR) and 458–480 (SPPT…QRPE). Residues 413 to 433 (PTAVATPPTPTTKNPRVSXPT) show a composition bias toward low complexity. Residues 446–468 (TTKAPITRLETASPPTRIRTTTS) form an O-glycosylated at seven sites with GalNAc region. Residues 585-694 (RAPARFTAKF…MSIAVTGSGS (110 aa)) form the Peptidase S72 domain. N-linked (GlcNAc...) asparagine glycans are attached at residues Asn623, Asn631, and Asn643. Cys651 and Cys695 form a disulfide bridge. Positions 706–717 (PKRVPSEAPPTE) are enriched in pro residues. The interval 706-727 (PKRVPSEAPPTEVPDRDPEKSS) is disordered. The span at 718-727 (VPDRDPEKSS) shows a compositional bias: basic and acidic residues. The helical transmembrane segment at 732–757 (YLHTVIPAVVVAAILLIAGIIAMICY) threads the bilayer. The Nuclear localization signal motif lies at 758–764 (RKKRKGK). Thr772 carries the phosphothreonine modification. The tract at residues 801–877 (LQEEKAPLPP…YRSPPPYVPP (77 aa)) is required for interaction with CAV3. Residues 805–877 (KAPLPPPEYP…YRSPPPYVPP (73 aa)) are disordered. Residues 814-828 (PNQSVPETTPLNQDT) show a composition bias toward polar residues. The span at 841–852 (NAPPYQPPPPFT) shows a compositional bias: pro residues. The segment at 862–877 (PKNMTPYRSPPPYVPP) is required for binding DMD and UTRN. The short motif at 871–874 (PPPY) is the PPXY motif element. A Phosphotyrosine; by SRC modification is found at Tyr874.

As to quaternary structure, monomer. Heterodimer of alpha- and beta-dystroglycan subunits which are the central components of the dystrophin-glycoprotein complex. This complex then can form a dystrophin-associated glycoprotein complex (DGC) which is composed of three subcomplexes: a cytoplasmic complex comprised of DMD (or UTRN), DTNA and a number of syntrophins, such as SNTB1, SNTB2, SNTG1 and SNTG2, the transmembrane dystroglycan complex, and the sarcoglycan-sarcospan complex. Interacts (via the N-terminal of alphaDAG1) with LARGE1; the interaction enhances laminin binding. Interacts with SGCD. Interacts with AGR2 and AGR3. Interacts (betaDAG1) with DMD; the interaction is inhibited by phosphorylation on the PPXY motif. Interacts (betaDAG1, via its PPXY motif) with UTRN (via its WWW and ZZ domains); the interaction is inhibited by phosphorylation on the PPXY motif. Interacts (betaDAG1, via its phosphorylated PPXY motif) with the SH2 domain-containing proteins, FYN, CSK, NCK and SHC. Interacts (betaDAG1) with CAV3 (via a central WW-like domain); the interaction disrupts the binding of DMD. BetaDAG1 directly interacts with ANK3, but not with ANK2; this interaction does not interfere with DMD-binding and is required for retention at costameres. Identified in a dystroglycan complex that contains at least PRX, DRP2, UTRN, DMD and DAG1. Interacts with POMGNT1. BetaDAG1 interacts with CD93. In terms of processing, O-glycosylated. POMGNT1 catalyzes the initial addition of N-acetylglucosamine, giving rise to the GlcNAc(beta1-2)Man(alpha1-)O-Ser/Thr moiety and thus providing the necessary basis for the addition of further carbohydrate moieties. Heavily O-glycosylated comprising of up to two thirds of its mass and the carbohydrate composition differs depending on tissue type. Mucin-type O-glycosylation is important for ligand binding activity. O-mannosylation of alpha-DAG1 is found in high abundance in both brain and muscle where the most abundant glycan is Sia-alpha-2-3-Gal-beta-1-4-Glc-NAc-beta-1-2-Man. In muscle, glycosylation on Thr-317, Thr-319 and Thr-379 by a phosphorylated O-mannosyl glycan with the structure 2-(N-acetylamido)-2-deoxygalactosyl-beta-1,3-2-(N-acetylamido)-2-deoxyglucosyl-beta-1,4-6-phosphomannose is mediated by like-acetylglucosaminyltransferase (LARGE1) protein amd is required for laminin binding. O-glycosylated in the N-terminal region with a core 1 or possibly core 8 glycan. The brain form displays a unique glycosylation pattern which is absent in other tissues; this form shows enhanced binding to laminin LAMA5 compared to the skeletal muscle form. Post-translationally, N-glycosylated. Autolytic cleavage produces the alpha and beta subunits. In cutaneous cells, as well as in certain pathological conditions, shedding of beta-dystroglycan can occur releasing a peptide of about 30 kDa. In terms of processing, SRC-mediated phosphorylation of the PPXY motif of the beta subunit recruits SH2 domain-containing proteins, but inhibits binding to WWW domain-containing proteins, DMD and UTRN. This phosphorylation also inhibits nuclear entry.

Its subcellular location is the secreted. The protein resides in the extracellular space. It localises to the cell membrane. It is found in the cytoplasm. The protein localises to the cytoskeleton. Its subcellular location is the nucleus. The protein resides in the nucleoplasm. It localises to the sarcolemma. It is found in the postsynaptic cell membrane. In terms of biological role, the dystroglycan complex is involved in a number of processes including laminin and basement membrane assembly, sarcolemmal stability, cell survival, peripheral nerve myelination, nodal structure, cell migration, and epithelial polarization. Functionally, extracellular peripheral glycoprotein that acts as a receptor for extracellular matrix proteins containing laminin-G domains. Receptor for laminin-2 (LAMA2) and agrin in peripheral nerve Schwann cells. Also acts as a receptor for laminin LAMA5. Its function is as follows. Transmembrane protein that plays important roles in connecting the extracellular matrix to the cytoskeleton. Acts as a cell adhesion receptor in both muscle and non-muscle tissues. Receptor for both DMD and UTRN and, through these interactions, scaffolds axin to the cytoskeleton. Also functions in cell adhesion-mediated signaling and implicated in cell polarity. The sequence is that of Dystroglycan 1 from Sus scrofa (Pig).